Consider the following 841-residue polypeptide: MVLNYIQRWFKWVIPTFGFLAIHYIYIISLTIIASILLFTGGTTTKIKYIDALFLASSATTQTGLNSVDLNSLSIWQQFILYGFTAITVPIWMHGSISFIRLYWFRRKFKDVVRQNRTRKFQRKLRKSLMKKSEDDEEQGVRGRKIRVMLPYLHSLRSPTSLKNFSRFDTHDSTNNPYFPDNPPSPKADISKDEYFGKYLPKKSDTLDMDLESHNMTFHDYEPSIENKNYDFGSSHSASMQMYEMDDLHPRLRRQSSFISSVNPLEADDTRETLSEGALVQESLPMAYSYSDTNLVVSRDSFTLTGDDNLFPEGGLRPANTIDGIVRSSLSSSSLSKDTEPSTVDMHIAFTGLNKPTIERERNLKLRKKSRFYKKSLRSRFSRGLHRPIRWTKSFTSNRRNLTLERVLSSAFAKKREPSISSRHTTMSLPYLSYNPTVDRNSAFVALSKEQRDELGGIEYRALKCVCSMVTLYFIIFNIAAFVTFIVFAYTAVGSREVIDSYDLRRGWWALFSSASSFNDLGFSLIPSSFVPMNRNIFLLLISSLFIIAGNTGFPCFFRTFIWTTYKLYPFSFEKKEAMAFLLDHPRRCFTLLFPSGATWVLFFVLLLLNVIDLVLFMVLDTGSKAVASLPKGIRVVNAIFQSVCTRTAGFTSVSISELHPAVLVSYMVMMYISVYPVAINMRNTNVYEERSLGVYRTEDDEGKSFLKDHLTEQLSYDLWYIFLGLFIICICEGGKISNPLDTDFSIFTVLFEVVSAYGTVGLSTGLSSSNCSLSARFTTISKLVIIALELRGRHRGLPRAVDRAILLPSEKNNLKEEEDYQRRHGFSIDNARGSIAVSRD.

2 helical membrane-spanning segments follow: residues 24–44 and 80–100; these read YIYI…GGTT and ILYG…ISFI. N116 and N164 each carry an N-linked (GlcNAc...) asparagine glycan. The segment at 173–192 is disordered; sequence STNNPYFPDNPPSPKADISK. N-linked (GlcNAc...) asparagine glycosylation is found at N215 and N401. Transmembrane regions (helical) follow at residues 469–489, 507–527, 537–557, 600–620, 662–682, 715–735, and 747–767; these read MVTL…IVFA, GWWA…SLIP, IFLL…FPCF, WVLF…FMVL, AVLV…AINM, LSYD…CEGG, and IFTV…STGL. A glycan (N-linked (GlcNAc...) asparagine) is linked at N771.

Belongs to the TrkH potassium transport family.

The protein localises to the cell membrane. Functionally, together with TRK2, defines the major, high-affinity potassium influx transport system. Involved in maintenance of the proper sodium/potassium ratio in the cell and in regulating the plasma membrane potential. The protein is Potassium transport protein 1 (trk1) of Schizosaccharomyces pombe (strain 972 / ATCC 24843) (Fission yeast).